Consider the following 112-residue polypeptide: T cell receptor alpha variable 34 (112 aa).

An N-terminal signal peptide occupies residues 1–21 (METVLQVLLGILGFQAAWVSS). One can recognise an Ig-like domain in the interval 22-112 (QELEQSPQSL…HAGIYLCGAD (91 aa)). N-linked (GlcNAc...) asparagine glycosylation is found at Asn-38 and Asn-42. Cys-43 and Cys-109 are joined by a disulfide.

As to quaternary structure, alpha-beta TR is a heterodimer composed of an alpha and beta chain; disulfide-linked. The alpha-beta TR is associated with the transmembrane signaling CD3 coreceptor proteins to form the TR-CD3 (TcR or TCR). The assembly of alpha-beta TR heterodimers with CD3 occurs in the endoplasmic reticulum where a single alpha-beta TR heterodimer associates with one CD3D-CD3E heterodimer, one CD3G-CD3E heterodimer and one CD247 homodimer forming a stable octameric structure. CD3D-CD3E and CD3G-CD3E heterodimers preferentially associate with TR alpha and TR beta chains, respectively. The association of the CD247 homodimer is the last step of TcR assembly in the endoplasmic reticulum and is required for transport to the cell surface.

Its subcellular location is the cell membrane. Its function is as follows. V region of the variable domain of T cell receptor (TR) alpha chain that participates in the antigen recognition. Alpha-beta T cell receptors are antigen specific receptors which are essential to the immune response and are present on the cell surface of T lymphocytes. Recognize peptide-major histocompatibility (MH) (pMH) complexes that are displayed by antigen presenting cells (APC), a prerequisite for efficient T cell adaptive immunity against pathogens. Binding of alpha-beta TR to pMH complex initiates TR-CD3 clustering on the cell surface and intracellular activation of LCK that phosphorylates the ITAM motifs of CD3G, CD3D, CD3E and CD247 enabling the recruitment of ZAP70. In turn ZAP70 phosphorylates LAT, which recruits numerous signaling molecules to form the LAT signalosome. The LAT signalosome propagates signal branching to three major signaling pathways, the calcium, the mitogen-activated protein kinase (MAPK) kinase and the nuclear factor NF-kappa-B (NF-kB) pathways, leading to the mobilization of transcription factors that are critical for gene expression and essential for T cell growth and differentiation. The T cell repertoire is generated in the thymus, by V-(D)-J rearrangement. This repertoire is then shaped by intrathymic selection events to generate a peripheral T cell pool of self-MH restricted, non-autoaggressive T cells. Post-thymic interaction of alpha-beta TR with the pMH complexes shapes TR structural and functional avidity. The chain is T cell receptor alpha variable 34 from Homo sapiens (Human).